The primary structure comprises 145 residues: Putative pre-16S rRNA nuclease (145 aa).

The protein belongs to the YqgF nuclease family.

The protein resides in the cytoplasm. Functionally, could be a nuclease involved in processing of the 5'-end of pre-16S rRNA. This Pseudomonas fluorescens protein is Putative pre-16S rRNA nuclease.